Here is a 649-residue protein sequence, read N- to C-terminus: ATP-dependent zinc metalloprotease FtsH (649 aa).

Residues 1–18 (MQCSYPLARQLERSSALN) lie on the Cytoplasmic side of the membrane. The chain crosses the membrane as a helical span at residues 19 to 39 (NNLFQKAAIWLVIALVLFTVF). Residues 40–115 (KQFDKPRAQD…VTGKADDEPN (76 aa)) lie on the Periplasmic side of the membrane. A helical membrane pass occupies residues 116–136 (VLVQALYYLGPTLLIIVFWFY). Residues 137–649 (MMRQMQGGGK…PATARADETV (513 aa)) are Cytoplasmic-facing. 210–217 (GPPGTGKT) is a binding site for ATP. Residue histidine 432 coordinates Zn(2+). The active site involves glutamate 433. Zn(2+) is bound by residues histidine 436 and aspartate 508. Residues 606–649 (IMAGRPPRPPRGAQGPNSGGNTPPGGSPVAPTNAPATARADETV) are disordered. The span at 616–626 (RGAQGPNSGGN) shows a compositional bias: low complexity.

In the central section; belongs to the AAA ATPase family. This sequence in the C-terminal section; belongs to the peptidase M41 family. Homohexamer. Zn(2+) is required as a cofactor.

The protein localises to the cell inner membrane. Its function is as follows. Acts as a processive, ATP-dependent zinc metallopeptidase for both cytoplasmic and membrane proteins. Plays a role in the quality control of integral membrane proteins. The polypeptide is ATP-dependent zinc metalloprotease FtsH (Cupriavidus metallidurans (strain ATCC 43123 / DSM 2839 / NBRC 102507 / CH34) (Ralstonia metallidurans)).